Consider the following 189-residue polypeptide: MADEQNLDTQNPEAQAAENAAPSDDLAARVQALEEQLAAAQDQSLRMAAELQNVRRRAEQDVEKAHKFALEKFANDLLPVVDSLERGLELSSPDDEAIKGVREGMQLTLKLFIDTLARHQLEAVEPHGEPFNPEHHQAMAMEESTHVEPNSVLKVFQKGYLLNGRLLRPAMVVVSKAPTTPPPSIDEQA.

Positions 1–24 (MADEQNLDTQNPEAQAAENAAPSD) are disordered. Over residues 10–24 (QNPEAQAAENAAPSD) the composition is skewed to low complexity.

Belongs to the GrpE family. Homodimer.

Its subcellular location is the cytoplasm. In terms of biological role, participates actively in the response to hyperosmotic and heat shock by preventing the aggregation of stress-denatured proteins, in association with DnaK and GrpE. It is the nucleotide exchange factor for DnaK and may function as a thermosensor. Unfolded proteins bind initially to DnaJ; upon interaction with the DnaJ-bound protein, DnaK hydrolyzes its bound ATP, resulting in the formation of a stable complex. GrpE releases ADP from DnaK; ATP binding to DnaK triggers the release of the substrate protein, thus completing the reaction cycle. Several rounds of ATP-dependent interactions between DnaJ, DnaK and GrpE are required for fully efficient folding. The polypeptide is Protein GrpE (Ectopseudomonas mendocina (strain ymp) (Pseudomonas mendocina)).